Reading from the N-terminus, the 393-residue chain is Envelope glycoprotein D (393 aa).

The N-terminal stretch at 1-25 is a signal peptide; the sequence is MGGAAARLGAVILFVVIVGLHGVRG. The interaction with TNFRSF14 stretch occupies residues 25 to 57; it reads GKYALADASLKMADPNRFRGKDLPVLDQLTDPP. Over 26–338 the chain is Virion surface; it reads KYALADASLK…PYHPPATPNN (313 aa). Zn(2+) is bound at residue His64. 3 disulfide bridges follow: Cys90/Cys213, Cys130/Cys226, and Cys142/Cys151. 2 N-linked (GlcNAc...) asparagine; by host glycosylation sites follow: Asn118 and Asn145. Asp239 serves as a coordination point for Zn(2+). The tract at residues 260–304 is profusion; the sequence is LKIAGWHGPRAPYTSTLLPPELPETPNATQPELAPEDPEDSALLE. The interval 273–300 is disordered; the sequence is TSTLLPPELPETPNATQPELAPEDPEDS. Asn286 is a glycosylation site (N-linked (GlcNAc...) asparagine; by host). Residues 339–363 traverse the membrane as a helical segment; the sequence is MGLIAGAVGGSLLAALVICGIVYWM. Residues 364 to 393 are Intravirion-facing; that stretch reads RRRTRKAPKRIRLPHIREDDQPSSHQPLFY.

The protein belongs to the herpesviridae glycoprotein D family. As to quaternary structure, homodimer. Interacts with host receptor TNFRSF14. Interacts with host receptor NECTIN1. Interacts (via profusion domain) with gB; this interaction occurs in the absence of gH/gL. Interacts (via profusion domain) with gH/gL heterodimer; this interaction occurs in the absence of gB. Associates with the gB-gH/gL-gD complex. Interacts (via C-terminus) with UL11 tegument protein. Interacts with host RSAD2.

It is found in the virion membrane. The protein resides in the host Golgi apparatus. Its function is as follows. Envelope glycoprotein that binds to the host cell entry receptors NECTIN1, TNFRSF14/HVEM and 3-O-sulfated heparan sulfate, promoting the virus entry into host cells. May trigger fusion with host membrane, by recruiting the fusion machinery composed of gB and gH/gL. This is Envelope glycoprotein D (gD) from Homo sapiens (Human).